The chain runs to 1220 residues: DNA-directed RNA polymerase subunit beta' (1220 aa).

The Zn(2+) site is built by C61, C63, C76, and C79. Positions 450, 452, and 454 each coordinate Mg(2+). The interval 1197–1220 (QPESESEEASDIPKLDDVAKTFDN) is disordered. The span at 1207–1220 (DIPKLDDVAKTFDN) shows a compositional bias: basic and acidic residues.

It belongs to the RNA polymerase beta' chain family. As to quaternary structure, the RNAP catalytic core consists of 2 alpha, 1 beta, 1 beta' and 1 omega subunit. When a sigma factor is associated with the core the holoenzyme is formed, which can initiate transcription. Mg(2+) serves as cofactor. It depends on Zn(2+) as a cofactor.

It carries out the reaction RNA(n) + a ribonucleoside 5'-triphosphate = RNA(n+1) + diphosphate. Its function is as follows. DNA-dependent RNA polymerase catalyzes the transcription of DNA into RNA using the four ribonucleoside triphosphates as substrates. The chain is DNA-directed RNA polymerase subunit beta' from Leuconostoc mesenteroides subsp. mesenteroides (strain ATCC 8293 / DSM 20343 / BCRC 11652 / CCM 1803 / JCM 6124 / NCDO 523 / NBRC 100496 / NCIMB 8023 / NCTC 12954 / NRRL B-1118 / 37Y).